The chain runs to 464 residues: Anthocyanidin 3-O-galactosyltransferase 3GT1 (464 aa).

An anthocyanidin-binding residues include serine 19 and histidine 21. Histidine 21 functions as the Proton acceptor in the catalytic mechanism. N-linked (GlcNAc...) asparagine glycosylation is present at asparagine 38. Aspartate 121 acts as the Charge relay in catalysis. Residue histidine 152 coordinates an anthocyanidin. The UDP-alpha-D-glucose site is built by alanine 342, glutamine 344, histidine 359, tryptophan 362, asparagine 363, serine 364, and glutamate 367. Glycine 382 contacts an anthocyanidin. Aspartate 383 contributes to the UDP-alpha-D-glucose binding site.

Belongs to the UDP-glycosyltransferase family. In terms of assembly, monomer. As to expression, mostly expressed in leaves and flowers and, to a lower extent, in roots. In flowers, mainly observed in petals, toruses and scapes, and at lower levels in pistils and stamens.

The enzyme catalyses cyanidin + UDP-alpha-D-galactose = cyanidin 3-O-beta-D-galactoside + UDP + H(+). The catalysed reaction is cyanidin + UDP-alpha-D-glucose = cyanidin 3-O-beta-D-glucoside + UDP + H(+). It catalyses the reaction delphinidin + UDP-alpha-D-glucose = delphinidin 3-O-beta-D-glucoside + UDP. It carries out the reaction malvidin + UDP-alpha-D-glucose = malvidin 3-O-beta-D-glucoside + UDP. The enzyme catalyses delphinidin + UDP-alpha-D-galactose = delphinidin 3-O-beta-D-galactoside + UDP + H(+). The catalysed reaction is pelargonidin + UDP-alpha-D-galactose = pelargonidin 3-O-beta-D-galactoside betaine + UDP. It catalyses the reaction peonidin + UDP-alpha-D-galactose = peonidin 3-O-beta-D-galactoside + UDP. It carries out the reaction malvidin + UDP-alpha-D-galactose = malvidin 3-O-beta-D-galactoside + UDP + H(+). The enzyme catalyses petunidin + UDP-alpha-D-galactose = petunidin 3-O-beta-D-galactoside + UDP. The catalysed reaction is an anthocyanidin + UDP-alpha-D-glucose + H(+) = an anthocyanidin 3-O-beta-D-glucoside + UDP. It catalyses the reaction an anthocyanidin + UDP-alpha-D-galactose = an anthocyanidin 3-O-beta-D-galactoside + UDP. It participates in pigment biosynthesis; anthocyanin biosynthesis. In terms of biological role, flavonoid 3-O-glycosyltransferase involved in the biosynthesis of anthocyanins conferring flower red/pink colors, mainly anthocyanidin 3-O-glycosides. Catalyzes the addition of UDP-sugar to the 3-OH of anthocyanidin, with a preference for UDP-galactose (UDP-Gal) as sugar donor and cyanidin as substrate; able to use delphinidin, pelargonidin, peonidin, malvidin and petunidin as substrates in the presence of UDP-Gal. Can also use UDP-glucose (UDP-Glu) as sugar donor with delphinidin, cyanidin and malvidin as substrates, but not active on pelargonidin, peonidin and petunidin. This chain is Anthocyanidin 3-O-galactosyltransferase 3GT1, found in Rhododendron delavayi (Rhododendron).